The sequence spans 229 residues: Potassium/proton antiporter CemA (229 aa).

Helical transmembrane passes span 7–27 (FSPI…YLSF), 106–126 (MILR…FYIW), and 189–209 (IISG…KYWI).

This sequence belongs to the CemA family.

Its subcellular location is the plastid membrane. The catalysed reaction is K(+)(in) + H(+)(out) = K(+)(out) + H(+)(in). In terms of biological role, may be involved in proton extrusion. This is Potassium/proton antiporter CemA from Cuscuta reflexa (Southern Asian dodder).